Reading from the N-terminus, the 216-residue chain is Pyrrolidone-carboxylate peptidase (216 aa).

Residues glutamate 80, cysteine 143, and histidine 168 contribute to the active site.

Belongs to the peptidase C15 family. Homotetramer.

The protein localises to the cytoplasm. The catalysed reaction is Release of an N-terminal pyroglutamyl group from a polypeptide, the second amino acid generally not being Pro.. In terms of biological role, removes 5-oxoproline from various penultimate amino acid residues except L-proline. This chain is Pyrrolidone-carboxylate peptidase, found in Cupriavidus taiwanensis (strain DSM 17343 / BCRC 17206 / CCUG 44338 / CIP 107171 / LMG 19424 / R1) (Ralstonia taiwanensis (strain LMG 19424)).